A 360-amino-acid polypeptide reads, in one-letter code: Phospho-N-acetylmuramoyl-pentapeptide-transferase (360 aa).

10 helical membrane-spanning segments follow: residues 21 to 41 (YLSF…LWMG), 73 to 93 (TMGG…WADL), 94 to 114 (TNPY…VGFV), 132 to 152 (WKYF…YAHG), 168 to 188 (VMPQ…VGTS), 199 to 219 (GLAI…AWAT), 239 to 259 (LVVV…FNTY), 263 to 283 (VFMG…IAVL), 288 to 308 (FVLV…ILQV), and 338 to 358 (VIVR…ATLK).

The protein belongs to the glycosyltransferase 4 family. MraY subfamily. The cofactor is Mg(2+).

It localises to the cell inner membrane. The catalysed reaction is UDP-N-acetyl-alpha-D-muramoyl-L-alanyl-gamma-D-glutamyl-meso-2,6-diaminopimeloyl-D-alanyl-D-alanine + di-trans,octa-cis-undecaprenyl phosphate = di-trans,octa-cis-undecaprenyl diphospho-N-acetyl-alpha-D-muramoyl-L-alanyl-D-glutamyl-meso-2,6-diaminopimeloyl-D-alanyl-D-alanine + UMP. It participates in cell wall biogenesis; peptidoglycan biosynthesis. Its function is as follows. Catalyzes the initial step of the lipid cycle reactions in the biosynthesis of the cell wall peptidoglycan: transfers peptidoglycan precursor phospho-MurNAc-pentapeptide from UDP-MurNAc-pentapeptide onto the lipid carrier undecaprenyl phosphate, yielding undecaprenyl-pyrophosphoryl-MurNAc-pentapeptide, known as lipid I. In Vibrio cholerae serotype O1 (strain ATCC 39541 / Classical Ogawa 395 / O395), this protein is Phospho-N-acetylmuramoyl-pentapeptide-transferase.